The primary structure comprises 129 residues: Membrane protein 0 (129 aa).

The tract at residues 1-25 (MATVHYSRRPGTPPVTLTSSPSMDD) is disordered. The PPXY motif signature appears at 44–47 (PPPY). The chain crosses the membrane as a helical span at residues 100–120 (FLILFGILTLTAVVVAIVAVF).

Belongs to the varicellovirus ORF0 protein family. As to quaternary structure, interacts with host ITCH; this interaction probably mediates ITCH degradation.

The protein resides in the host Golgi apparatus membrane. The sequence is that of Membrane protein 0 from Homo sapiens (Human).